The primary structure comprises 825 residues: Fibrous sheath CABYR-binding protein (825 aa).

Disordered regions lie at residues methionine 1–alanine 43 and glutamine 113–tyrosine 139. The segment covering lysine 21–serine 40 has biased composition (polar residues). At serine 160 the chain carries Phosphoserine. Disordered stretches follow at residues serine 168–aspartate 232, glutamine 244–serine 718, and glycine 732–alanine 751. The segment covering proline 200–glutamine 220 has biased composition (polar residues). The segment covering alanine 277–histidine 290 has biased composition (basic and acidic residues). Composition is skewed to low complexity over residues alanine 348 to glutamate 357 and proline 398 to glutamate 407. Positions valine 610–glutamate 676 are enriched in pro residues.

Interacts with CABYR. Interacts with ROPN1 and ROPN1L; the interaction increases upon spermatozoa capacitation conditions. In terms of processing, phosphorylated by PKA upon spermatozoa capacitation conditions.

The protein resides in the cell projection. It is found in the cilium. It localises to the flagellum. May be involved in the later stages of fibrous sheath biogenesis and spermatozoa capacitation. Inhibits ROPN1 and ROPN1L SUMOylation. Binds calcium. The polypeptide is Fibrous sheath CABYR-binding protein (FSCB) (Homo sapiens (Human)).